The primary structure comprises 213 residues: Holliday junction branch migration complex subunit RuvA (213 aa).

The segment at Met1–Ser69 is domain I. The interval Ser70–Val148 is domain II. The flexible linker stretch occupies residues Ala149–Leu158. Residues Leu158–His213 are domain III.

Belongs to the RuvA family. In terms of assembly, homotetramer. Forms an RuvA(8)-RuvB(12)-Holliday junction (HJ) complex. HJ DNA is sandwiched between 2 RuvA tetramers; dsDNA enters through RuvA and exits via RuvB. An RuvB hexamer assembles on each DNA strand where it exits the tetramer. Each RuvB hexamer is contacted by two RuvA subunits (via domain III) on 2 adjacent RuvB subunits; this complex drives branch migration. In the full resolvosome a probable DNA-RuvA(4)-RuvB(12)-RuvC(2) complex forms which resolves the HJ.

The protein resides in the cytoplasm. In terms of biological role, the RuvA-RuvB-RuvC complex processes Holliday junction (HJ) DNA during genetic recombination and DNA repair, while the RuvA-RuvB complex plays an important role in the rescue of blocked DNA replication forks via replication fork reversal (RFR). RuvA specifically binds to HJ cruciform DNA, conferring on it an open structure. The RuvB hexamer acts as an ATP-dependent pump, pulling dsDNA into and through the RuvAB complex. HJ branch migration allows RuvC to scan DNA until it finds its consensus sequence, where it cleaves and resolves the cruciform DNA. This is Holliday junction branch migration complex subunit RuvA from Nostoc sp. (strain PCC 7120 / SAG 25.82 / UTEX 2576).